The chain runs to 134 residues: Secreted RxLR effector protein 1 (134 aa).

A signal peptide spans M1–A22. The disordered stretch occupies residues S32 to R60. Low complexity predominate over residues S37–S52. Positions R57–R79 match the RxLR-dEER motif.

The protein belongs to the RxLR effector family.

The protein resides in the secreted. It is found in the host nucleus. Its function is as follows. Effector that acts as a broad suppressor of cell death to interrupt plant immunity. Inhibits cell death induced by cell death-inducing proteins, including the PAMP elicitor INF1 from P.infestans. The sequence is that of Secreted RxLR effector protein 1 from Plasmopara viticola (Downy mildew of grapevine).